The following is a 299-amino-acid chain: tRNA dimethylallyltransferase (299 aa).

An ATP-binding site is contributed by 11-18 (GPTAVGKT). Residue 13 to 18 (TAVGKT) participates in substrate binding. Positions 36–39 (DSQQ) are interaction with substrate tRNA.

It belongs to the IPP transferase family. In terms of assembly, monomer. It depends on Mg(2+) as a cofactor.

The catalysed reaction is adenosine(37) in tRNA + dimethylallyl diphosphate = N(6)-dimethylallyladenosine(37) in tRNA + diphosphate. Catalyzes the transfer of a dimethylallyl group onto the adenine at position 37 in tRNAs that read codons beginning with uridine, leading to the formation of N6-(dimethylallyl)adenosine (i(6)A). This is tRNA dimethylallyltransferase from Streptococcus pyogenes serotype M1.